A 320-amino-acid polypeptide reads, in one-letter code: Lipoyl synthase (320 aa).

The interval Ala9 to Pro31 is disordered. Positions Ala12–Pro31 are enriched in basic and acidic residues. [4Fe-4S] cluster contacts are provided by Cys60, Cys65, Cys71, Cys86, Cys90, Cys93, and Ser299. The 217-residue stretch at Trp72–Leu288 folds into the Radical SAM core domain.

It belongs to the radical SAM superfamily. Lipoyl synthase family. It depends on [4Fe-4S] cluster as a cofactor.

It localises to the cytoplasm. The catalysed reaction is [[Fe-S] cluster scaffold protein carrying a second [4Fe-4S](2+) cluster] + N(6)-octanoyl-L-lysyl-[protein] + 2 oxidized [2Fe-2S]-[ferredoxin] + 2 S-adenosyl-L-methionine + 4 H(+) = [[Fe-S] cluster scaffold protein] + N(6)-[(R)-dihydrolipoyl]-L-lysyl-[protein] + 4 Fe(3+) + 2 hydrogen sulfide + 2 5'-deoxyadenosine + 2 L-methionine + 2 reduced [2Fe-2S]-[ferredoxin]. It functions in the pathway protein modification; protein lipoylation via endogenous pathway; protein N(6)-(lipoyl)lysine from octanoyl-[acyl-carrier-protein]: step 2/2. Its function is as follows. Catalyzes the radical-mediated insertion of two sulfur atoms into the C-6 and C-8 positions of the octanoyl moiety bound to the lipoyl domains of lipoate-dependent enzymes, thereby converting the octanoylated domains into lipoylated derivatives. The chain is Lipoyl synthase from Methylobacterium nodulans (strain LMG 21967 / CNCM I-2342 / ORS 2060).